A 74-amino-acid chain; its full sequence is Cytochrome c oxidase assembly factor 5 (74 aa).

Residues 27–65 form the CHCH domain; the sequence is QSDCVLKEGKSPRQCLKEGNCKALKYSFFECKRSMLDAR. The Cx10C motif signature appears at 30–41; the sequence is CVLKEGKSPRQC. Disulfide bonds link cysteine 30–cysteine 57 and cysteine 41–cysteine 47. Position 37 is a phosphoserine (serine 37). Residues 47 to 57 carry the Cx9C motif motif; that stretch reads CKALKYSFFEC.

This sequence belongs to the PET191 family.

Involved in an early step of the mitochondrial complex IV assembly process. In Bos taurus (Bovine), this protein is Cytochrome c oxidase assembly factor 5 (COA5).